The sequence spans 183 residues: MNVSFSIAPYFFKERRAKLNSFRKRKVEIVAEIDSLLKNSSSLAIVEYRGLTVNELEQLRKEFKSAGVLSKVYKNRLFKIAAENNGYLDLQTDLVGPNLFAFGTTDAIAPAKIIAKNAKEQPLLILKGGIYDNQVVSAAENALISALPSYTEALTMLASGLQSPLKQLAFGLKLLIDEQKITA.

This sequence belongs to the universal ribosomal protein uL10 family. In terms of assembly, part of the ribosomal stalk of the 50S ribosomal subunit. The N-terminus interacts with L11 and the large rRNA to form the base of the stalk. The C-terminus forms an elongated spine to which L12 dimers bind in a sequential fashion forming a multimeric L10(L12)X complex.

In terms of biological role, forms part of the ribosomal stalk, playing a central role in the interaction of the ribosome with GTP-bound translation factors. This chain is Large ribosomal subunit protein uL10, found in Mesomycoplasma hyopneumoniae (strain 232) (Mycoplasma hyopneumoniae).